A 294-amino-acid chain; its full sequence is Nucleotide-binding protein Smal_0950 (294 aa).

16–23 is an ATP binding site; the sequence is GLSGSGKS. 69 to 72 contacts GTP; the sequence is DVRG.

It belongs to the RapZ-like family.

In terms of biological role, displays ATPase and GTPase activities. The chain is Nucleotide-binding protein Smal_0950 from Stenotrophomonas maltophilia (strain R551-3).